Here is a 66-residue protein sequence, read N- to C-terminus: Large ribosomal subunit protein uL30 (66 aa).

Belongs to the universal ribosomal protein uL30 family. As to quaternary structure, part of the 50S ribosomal subunit.

The chain is Large ribosomal subunit protein uL30 from Azorhizobium caulinodans (strain ATCC 43989 / DSM 5975 / JCM 20966 / LMG 6465 / NBRC 14845 / NCIMB 13405 / ORS 571).